We begin with the raw amino-acid sequence, 421 residues long: MIMQDIRLRLEPQHSKATFISSSSASSSSSQTAETTLIETAEKSPASEAAAGTVTTTSPQHFFHHHHPPAHPHPPRQQPHPHSHSHPHPHPQLQRRPVEQLHLLHSHHDVQELSGQEHPHPQPGSHPHPHHLRSPSSEEDNSPTEMNNCRRLVDKPPLVKRLTMGIGLLRGTEDSRPLMHSTCGSSLTSGSGCGSTQTISDGYVNEAICEPDKYVASKFGDSCRQSLSALESATQRLQVELPAASKKYLRETCSANSSPKLFPGHSALRLDNLSLAEQQELKGAAWFQAGIPREISLEALSRQSPGAFLVRQSSTKPGCFALSLRVPPPSPRVAHYLILRTQRGYKIKGFTKEFSSLKALITHHSVMPELLPVPLTLPRPPSTRSQRSQGAYAGGTGNGGADFEMYGSLNDFRKMMADLNV.

Disordered stretches follow at residues 18–94 (TFIS…PQLQ), 109–154 (DVQE…RLVD), 173–194 (EDSR…SGCG), and 372–396 (PVPL…AGGT). The span at 21 to 30 (SSSSASSSSS) shows a compositional bias: low complexity. Over residues 62-89 (FFHHHHPPAHPHPPRQQPHPHSHSHPHP) the composition is skewed to basic residues. Residues 109–120 (DVQELSGQEHPH) are compositionally biased toward basic and acidic residues. The segment covering 181 to 194 (STCGSSLTSGSGCG) has biased composition (low complexity). The SH2 domain maps to 286–379 (WFQAGIPREI…LLPVPLTLPR (94 aa)).

In terms of assembly, may interact (via SH2 domain) with Egfr (when phosphorylated). Detected along the wing margin, with high levels of expression in two stripes of cells on either side of the dorsal/ventral boundary and lower levels of expression in a small region at the anteroposterior boundary (at protein level). High levels of expression along two parallel stripes of cells on either side of the wing pouch dorsal/ventral boundary, and slightly lower levels of expression in a region either side of the anteroposterior boundary. Also expressed in discrete regions of the wing imaginal disk outside of the pouch. Expressed in eye imaginal disk photoreceptors with highest levels of expression in R7 photoreceptor cells.

Functionally, involved in the negative regulation of the Egfr/Ras signaling pathway. During wing morphogenesis, may function redundantly with PVRAP to inhibit Egfr activity and prevent uncontrolled cell growth. The sequence is that of EGFR adapter protein from Drosophila melanogaster (Fruit fly).